The sequence spans 148 residues: Large ribosomal subunit protein bL9 (148 aa).

The protein belongs to the bacterial ribosomal protein bL9 family.

Its function is as follows. Binds to the 23S rRNA. The polypeptide is Large ribosomal subunit protein bL9 (Lachnoclostridium phytofermentans (strain ATCC 700394 / DSM 18823 / ISDg) (Clostridium phytofermentans)).